Reading from the N-terminus, the 405-residue chain is Transposase from transposon Tn1545 (405 aa).

The 85-residue stretch at 79–163 folds into the Core-binding (CB) domain; that stretch reads GKKMTLCQLY…SLKASFYIAI (85 aa). A Tyr recombinase domain is found at 186-392; sequence VPKTVLTEEQ…TFDSAMAEMK (207 aa). Active-site residues include Arg-225, Lys-264, His-343, Arg-346, and His-369. Tyr-379 serves as the catalytic O-(3'-phospho-DNA)-tyrosine intermediate.

Belongs to the 'phage' integrase family.

The sequence is that of Transposase from transposon Tn1545 (int) from Streptococcus agalactiae serotype V (strain ATCC BAA-611 / 2603 V/R).